A 198-amino-acid chain; its full sequence is Ribonuclease HII (198 aa).

The region spanning 3-198 (FLEGGVDEAG…SWRTLRGESP (196 aa)) is the RNase H type-2 domain. The a divalent metal cation site is built by Asp9, Glu10, and Asp104.

The protein belongs to the RNase HII family. It depends on Mn(2+) as a cofactor. Requires Mg(2+) as cofactor.

It is found in the cytoplasm. It carries out the reaction Endonucleolytic cleavage to 5'-phosphomonoester.. Endonuclease that specifically degrades the RNA of RNA-DNA hybrids. The polypeptide is Ribonuclease HII (Pyrobaculum neutrophilum (strain DSM 2338 / JCM 9278 / NBRC 100436 / V24Sta) (Thermoproteus neutrophilus)).